A 430-amino-acid chain; its full sequence is Adenylosuccinate synthetase (430 aa).

GTP contacts are provided by residues 12–18 (GDEGKGK) and 40–42 (GHT). The active-site Proton acceptor is the aspartate 13. Mg(2+) contacts are provided by aspartate 13 and glycine 40. IMP contacts are provided by residues 13-16 (DEGK), 38-41 (NAGH), threonine 128, arginine 142, glutamine 223, threonine 238, and arginine 302. The active-site Proton donor is histidine 41. 298–304 (TTTGRPR) provides a ligand contact to substrate. Residues arginine 304, 330–332 (SID), and 413–415 (SVG) each bind GTP.

This sequence belongs to the adenylosuccinate synthetase family. Homodimer. The cofactor is Mg(2+).

The protein localises to the cytoplasm. The enzyme catalyses IMP + L-aspartate + GTP = N(6)-(1,2-dicarboxyethyl)-AMP + GDP + phosphate + 2 H(+). The protein operates within purine metabolism; AMP biosynthesis via de novo pathway; AMP from IMP: step 1/2. Its function is as follows. Plays an important role in the de novo pathway of purine nucleotide biosynthesis. Catalyzes the first committed step in the biosynthesis of AMP from IMP. The chain is Adenylosuccinate synthetase from Lactococcus lactis subsp. cremoris (strain MG1363).